The chain runs to 274 residues: NH(3)-dependent NAD(+) synthetase (274 aa).

46 to 53 contributes to the ATP binding site; sequence GISGGQDS. A Mg(2+)-binding site is contributed by Asp52. Arg140 provides a ligand contact to deamido-NAD(+). Thr160 provides a ligand contact to ATP. Mg(2+) is bound at residue Glu165. The deamido-NAD(+) site is built by Lys173 and Asp180. 2 residues coordinate ATP: Lys189 and Thr211. 260–261 provides a ligand contact to deamido-NAD(+); the sequence is HK.

The protein belongs to the NAD synthetase family. Homodimer.

It catalyses the reaction deamido-NAD(+) + NH4(+) + ATP = AMP + diphosphate + NAD(+) + H(+). It participates in cofactor biosynthesis; NAD(+) biosynthesis; NAD(+) from deamido-NAD(+) (ammonia route): step 1/1. Its function is as follows. Catalyzes the ATP-dependent amidation of deamido-NAD to form NAD. Uses ammonia as a nitrogen source. This is NH(3)-dependent NAD(+) synthetase from Listeria monocytogenes serotype 4b (strain CLIP80459).